The following is a 426-amino-acid chain: MMPTLAPPSVLSAPQRRCQILLTLFQPGLTATMATFSELNGVDDDIASLDISETGREILRYHQLTLTTGYDGSYRVEGTVLNQRLCLFHWLRRGFRLCPSFITSQFTPALKSELKRRGIARNFYDDTNLQALVNLCSRRLQKRFESRDIHFLCLYLQYCLLQHHAGITPQFNPLQRRWAESCLEFQVAQEIGRHWQRRALQPVPPDEPLFMALLFSMLRVPDPLRDAHQRDRQLRQSIKRLVNHFRELGNVRFYDEQGLCDQLYTHLAQALNRSLFAIGIDNTLPEEFARLYPRLVRTTRAALAGFESEYGVHLSDEESGLVAVIFGAWLMQENDLHEKQIILLTGNDSEREAQIEQQLRELTLLPLNIKHMSVKAFLQTGAPRGAALIIAPYTMPLPLFSPPLIYTDLTLTTHQQEQIRKMLESA.

2 PRD domains span residues 120-225 (ARNF…DPLR) and 229-336 (QRDR…ENDL).

The polypeptide is Stationary phase-inducible protein CsiE (csiE) (Escherichia coli (strain K12)).